Here is an 89-residue protein sequence, read N- to C-terminus: Small ribosomal subunit protein uS15 (89 aa).

The protein belongs to the universal ribosomal protein uS15 family. In terms of assembly, part of the 30S ribosomal subunit. Forms a bridge to the 50S subunit in the 70S ribosome, contacting the 23S rRNA.

In terms of biological role, one of the primary rRNA binding proteins, it binds directly to 16S rRNA where it helps nucleate assembly of the platform of the 30S subunit by binding and bridging several RNA helices of the 16S rRNA. Forms an intersubunit bridge (bridge B4) with the 23S rRNA of the 50S subunit in the ribosome. This is Small ribosomal subunit protein uS15 from Staphylococcus epidermidis (strain ATCC 12228 / FDA PCI 1200).